The chain runs to 632 residues: 1-deoxy-D-xylulose-5-phosphate synthase (632 aa).

Residues H87 and 128 to 130 (GHS) contribute to the thiamine diphosphate site. D159 contacts Mg(2+). Thiamine diphosphate-binding positions include 160 to 161 (GA), N188, F295, and E378. A Mg(2+)-binding site is contributed by N188.

Belongs to the transketolase family. DXPS subfamily. Homodimer. It depends on Mg(2+) as a cofactor. The cofactor is thiamine diphosphate.

The enzyme catalyses D-glyceraldehyde 3-phosphate + pyruvate + H(+) = 1-deoxy-D-xylulose 5-phosphate + CO2. Its pathway is metabolic intermediate biosynthesis; 1-deoxy-D-xylulose 5-phosphate biosynthesis; 1-deoxy-D-xylulose 5-phosphate from D-glyceraldehyde 3-phosphate and pyruvate: step 1/1. In terms of biological role, catalyzes the acyloin condensation reaction between C atoms 2 and 3 of pyruvate and glyceraldehyde 3-phosphate to yield 1-deoxy-D-xylulose-5-phosphate (DXP). The polypeptide is 1-deoxy-D-xylulose-5-phosphate synthase (Pseudomonas fluorescens (strain SBW25)).